We begin with the raw amino-acid sequence, 417 residues long: Lipoyl synthase, mitochondrial (417 aa).

Residues 1–30 (MATSIPRSRCFLTSSTLKVVPRSRTPLRSF) constitute a mitochondrion transit peptide. Residues 23–62 (SRTPLRSFATTSDTPQTSVPEAPGKRSRPPTSFSDTLNAG) are disordered. Composition is skewed to polar residues over residues 30-41 (FATTSDTPQTSV) and 51-61 (PPTSFSDTLNA). [4Fe-4S] cluster is bound by residues Cys132, Cys137, Cys143, Cys163, Cys167, Cys170, and Ser378. One can recognise a Radical SAM core domain in the interval 146–367 (GSSKSAATAT…RQRALDMGFL (222 aa)).

The protein belongs to the radical SAM superfamily. Lipoyl synthase family. [4Fe-4S] cluster serves as cofactor.

Its subcellular location is the mitochondrion. It carries out the reaction [[Fe-S] cluster scaffold protein carrying a second [4Fe-4S](2+) cluster] + N(6)-octanoyl-L-lysyl-[protein] + 2 oxidized [2Fe-2S]-[ferredoxin] + 2 S-adenosyl-L-methionine + 4 H(+) = [[Fe-S] cluster scaffold protein] + N(6)-[(R)-dihydrolipoyl]-L-lysyl-[protein] + 4 Fe(3+) + 2 hydrogen sulfide + 2 5'-deoxyadenosine + 2 L-methionine + 2 reduced [2Fe-2S]-[ferredoxin]. It participates in protein modification; protein lipoylation via endogenous pathway; protein N(6)-(lipoyl)lysine from octanoyl-[acyl-carrier-protein]: step 2/2. Its function is as follows. Catalyzes the radical-mediated insertion of two sulfur atoms into the C-6 and C-8 positions of the octanoyl moiety bound to the lipoyl domains of lipoate-dependent enzymes, thereby converting the octanoylated domains into lipoylated derivatives. The protein is Lipoyl synthase, mitochondrial of Pyrenophora tritici-repentis (strain Pt-1C-BFP) (Wheat tan spot fungus).